Consider the following 626-residue polypeptide: Janus kinase and microtubule-interacting protein 1 (626 aa).

Residues 1–25 (MSKKGRSKGEKPETETDSVQMANEE) form a disordered region. The segment at 1 to 365 (MSKKGRSKGE…KLKSLTRENV (365 aa)) is mediates association with microtubules. Coiled coils occupy residues 13 to 255 (ETET…EAER) and 284 to 413 (ERDV…DDLS). The tract at residues 365-626 (VEMKEKLSAQ…ILFEPKLKFV (262 aa)) is mediates interaction with TYK2 and GABBR1. Ser-382 is subject to Phosphoserine. The span at 452 to 461 (ETLSETSYNT) shows a compositional bias: polar residues. The tract at residues 452-481 (ETLSETSYNTDRTDRTPATPEEDLDETTTR) is disordered. Position 470 is a phosphothreonine (Thr-470). Residues 490–604 (QLTREYQALQ…EFRVLELEVR (115 aa)) adopt a coiled-coil conformation.

The protein belongs to the JAKMIP family. Homodimer. Interacts with JAK1 and TYK2. Forms a complex with GABBR1 and KIF5B/kinesin-1. Phosphorylated. In terms of tissue distribution, specifically expressed in brain and testis by spermatogonia, spermatocytes, spermatozoa and Sertoli cells (at protein level).

It localises to the cytoplasm. It is found in the cytoskeleton. The protein localises to the membrane. Associates with microtubules and may play a role in the microtubule-dependent transport of the GABA-B receptor. May play a role in JAK1 signaling and regulate microtubule cytoskeleton rearrangements. This is Janus kinase and microtubule-interacting protein 1 (Jakmip1) from Rattus norvegicus (Rat).